Reading from the N-terminus, the 240-residue chain is Proteasome subunit beta type-1 (240 aa).

M1 carries the N-acetylmethionine modification. Residues 1-27 (MLSTAAYRDVERELGMGPHGSAGPVQL) constitute a propeptide that is removed on maturation. A glycan (O-linked (GlcNAc) serine) is linked at S57. Phosphoserine is present on residues S61 and S67. Y149 is modified (phosphotyrosine). S161 is modified (phosphoserine). N6-acetyllysine is present on K203. O-linked (GlcNAc) serine glycosylation is present at S208.

It belongs to the peptidase T1B family. In terms of assembly, the 26S proteasome consists of a 20S proteasome core and two 19S regulatory subunits. The 20S proteasome core is a barrel-shaped complex made of 28 subunits that are arranged in four stacked rings. The two outer rings are each formed by seven alpha subunits, and the two inner rings are formed by seven beta subunits. The proteolytic activity is exerted by three beta-subunits PSMB5, PSMB6 and PSMB7. Interacts with SERPINB2. Interacts with RFPL4A. In terms of tissue distribution, detected in liver (at protein level).

Its subcellular location is the cytoplasm. The protein resides in the nucleus. In terms of biological role, non-catalytic component of the 20S core proteasome complex involved in the proteolytic degradation of most intracellular proteins. This complex plays numerous essential roles within the cell by associating with different regulatory particles. Associated with two 19S regulatory particles, forms the 26S proteasome and thus participates in the ATP-dependent degradation of ubiquitinated proteins. The 26S proteasome plays a key role in the maintenance of protein homeostasis by removing misfolded or damaged proteins that could impair cellular functions, and by removing proteins whose functions are no longer required. Associated with the PA200 or PA28, the 20S proteasome mediates ubiquitin-independent protein degradation. This type of proteolysis is required in several pathways including spermatogenesis (20S-PA200 complex) or generation of a subset of MHC class I-presented antigenic peptides (20S-PA28 complex). The chain is Proteasome subunit beta type-1 (Psmb1) from Mus musculus (Mouse).